Here is a 391-residue protein sequence, read N- to C-terminus: uncharacterized protein (391 aa).

Positions 247–387 (AVIVYATIYS…KIKEFGRKLA (141 aa)) constitute a Flavodoxin-like domain.

This is an uncharacterized protein from Methanocaldococcus jannaschii (strain ATCC 43067 / DSM 2661 / JAL-1 / JCM 10045 / NBRC 100440) (Methanococcus jannaschii).